Here is a 562-residue protein sequence, read N- to C-terminus: Arginine--tRNA ligase (562 aa).

A 'HIGH' region motif is present at residues 130 to 140; the sequence is ANPTGPLHIGH.

This sequence belongs to the class-I aminoacyl-tRNA synthetase family. Monomer.

It localises to the cytoplasm. It carries out the reaction tRNA(Arg) + L-arginine + ATP = L-arginyl-tRNA(Arg) + AMP + diphosphate. This is Arginine--tRNA ligase from Geobacter metallireducens (strain ATCC 53774 / DSM 7210 / GS-15).